The following is a 29-amino-acid chain: Potassium channel toxin alpha-KTx 20.1 (29 aa).

Intrachain disulfides connect cysteine 2-cysteine 20, cysteine 7-cysteine 24, and cysteine 11-cysteine 26.

Belongs to the short scorpion toxin superfamily. Potassium channel inhibitor family. Alpha-KTx 20 subfamily. As to expression, expressed by the venom gland.

The protein resides in the secreted. In terms of biological role, reduces potassium currents through Kv1.2/KCNA2 and Kv1.3/KCNA3 voltage-gated potassium channels. This chain is Potassium channel toxin alpha-KTx 20.1, found in Tityus trivittatus (Argentinean scorpion).